We begin with the raw amino-acid sequence, 488 residues long: Malonate-semialdehyde dehydrogenase 2 (488 aa).

Residues F155, K179, E182, R183, and S232 each coordinate NAD(+). The active-site Nucleophile is C287. E387 provides a ligand contact to NAD(+).

The protein belongs to the aldehyde dehydrogenase family. IolA subfamily. In terms of assembly, homotetramer.

It catalyses the reaction 3-oxopropanoate + NAD(+) + CoA + H2O = hydrogencarbonate + acetyl-CoA + NADH + H(+). It carries out the reaction 2-methyl-3-oxopropanoate + NAD(+) + CoA + H2O = propanoyl-CoA + hydrogencarbonate + NADH + H(+). Its pathway is polyol metabolism; myo-inositol degradation into acetyl-CoA; acetyl-CoA from myo-inositol: step 7/7. Catalyzes the oxidation of malonate semialdehyde (MSA) and methylmalonate semialdehyde (MMSA) into acetyl-CoA and propanoyl-CoA, respectively. Is involved in a myo-inositol catabolic pathway. Bicarbonate, and not CO2, is the end-product of the enzymatic reaction. This is Malonate-semialdehyde dehydrogenase 2 from Bacillus cereus (strain ZK / E33L).